We begin with the raw amino-acid sequence, 191 residues long: Protein Ves (191 aa).

This sequence belongs to the Ves family.

This chain is Protein Ves, found in Escherichia coli (strain SMS-3-5 / SECEC).